A 208-amino-acid polypeptide reads, in one-letter code: Dephospho-CoA kinase (208 aa).

A DPCK domain is found at 8 to 208 (LVGVTGGIGS…VYQSLLTVVE (201 aa)). 16 to 21 (GSGKST) is an ATP binding site.

It belongs to the CoaE family.

It is found in the cytoplasm. The catalysed reaction is 3'-dephospho-CoA + ATP = ADP + CoA + H(+). Its pathway is cofactor biosynthesis; coenzyme A biosynthesis; CoA from (R)-pantothenate: step 5/5. Its function is as follows. Catalyzes the phosphorylation of the 3'-hydroxyl group of dephosphocoenzyme A to form coenzyme A. The sequence is that of Dephospho-CoA kinase from Chlorobaculum tepidum (strain ATCC 49652 / DSM 12025 / NBRC 103806 / TLS) (Chlorobium tepidum).